The sequence spans 498 residues: ATP synthase subunit beta, chloroplastic (498 aa).

Thr6 carries the post-translational modification Phosphothreonine. Ser13 carries the post-translational modification Phosphoserine. 172 to 179 (GGAGVGKT) provides a ligand contact to ATP.

It belongs to the ATPase alpha/beta chains family. F-type ATPases have 2 components, CF(1) - the catalytic core - and CF(0) - the membrane proton channel. CF(1) has five subunits: alpha(3), beta(3), gamma(1), delta(1), epsilon(1). CF(0) has four main subunits: a(1), b(1), b'(1) and c(9-12).

It localises to the plastid. The protein localises to the chloroplast thylakoid membrane. It catalyses the reaction ATP + H2O + 4 H(+)(in) = ADP + phosphate + 5 H(+)(out). In terms of biological role, produces ATP from ADP in the presence of a proton gradient across the membrane. The catalytic sites are hosted primarily by the beta subunits. The protein is ATP synthase subunit beta, chloroplastic of Arabis hirsuta (Hairy rock-cress).